Reading from the N-terminus, the 299-residue chain is GTPase Era (299 aa).

Positions 5–172 (KSGFVSIIGR…IDVLKTYLPE (168 aa)) constitute an Era-type G domain. Residues 13–20 (GRPNVGKS) form a G1 region. A GTP-binding site is contributed by 13-20 (GRPNVGKS). The segment at 39-43 (QTTRN) is G2. A G3 region spans residues 60-63 (DTPG). Residues 60–64 (DTPGI) and 122–125 (NKID) contribute to the GTP site. The G4 stretch occupies residues 122 to 125 (NKID). The interval 151-153 (ISA) is G5. In terms of domain architecture, KH type-2 spans 203 to 280 (TSEEIPHAIG…YLELWVKVQR (78 aa)).

This sequence belongs to the TRAFAC class TrmE-Era-EngA-EngB-Septin-like GTPase superfamily. Era GTPase family. In terms of assembly, monomer.

Its subcellular location is the cytoplasm. It localises to the cell membrane. In terms of biological role, an essential GTPase that binds both GDP and GTP, with rapid nucleotide exchange. Plays a role in 16S rRNA processing and 30S ribosomal subunit biogenesis and possibly also in cell cycle regulation and energy metabolism. The polypeptide is GTPase Era (Staphylococcus aureus (strain NCTC 8325 / PS 47)).